Reading from the N-terminus, the 125-residue chain is Large ribosomal subunit protein bL12 (125 aa).

It belongs to the bacterial ribosomal protein bL12 family. In terms of assembly, homodimer. Part of the ribosomal stalk of the 50S ribosomal subunit. Forms a multimeric L10(L12)X complex, where L10 forms an elongated spine to which 2 to 4 L12 dimers bind in a sequential fashion. Binds GTP-bound translation factors.

Functionally, forms part of the ribosomal stalk which helps the ribosome interact with GTP-bound translation factors. Is thus essential for accurate translation. In Thioalkalivibrio sulfidiphilus (strain HL-EbGR7), this protein is Large ribosomal subunit protein bL12.